A 125-amino-acid polypeptide reads, in one-letter code: Large ribosomal subunit protein bL12 (125 aa).

Belongs to the bacterial ribosomal protein bL12 family. Homodimer. Part of the ribosomal stalk of the 50S ribosomal subunit. Forms a multimeric L10(L12)X complex, where L10 forms an elongated spine to which 2 to 4 L12 dimers bind in a sequential fashion. Binds GTP-bound translation factors.

Its function is as follows. Forms part of the ribosomal stalk which helps the ribosome interact with GTP-bound translation factors. Is thus essential for accurate translation. This chain is Large ribosomal subunit protein bL12, found in Campylobacter lari (strain RM2100 / D67 / ATCC BAA-1060).